Reading from the N-terminus, the 295-residue chain is Protoheme IX farnesyltransferase (295 aa).

9 helical membrane-spanning segments follow: residues 30–50 (LVVLTGVTGIIIAPGNIHPLI), 51–71 (AVISTLCIALGSGAAGAINMW), 93–115 (ISRSSALEVGLVLSFISVTIMMI), 119–136 (YISGILLAISIGFYIYVY), 148–168 (IVIGGAAGALPPIIGWTSVTG), 175–195 (LVLFLIIFMWTPPHFWALSLL), 219–239 (IHILVYSILLFPITLLPGLFL), 244–264 (LYEITAIPLGLMFVVQAFQVF), and 275–295 (MFTYSIIYLFILFTCIMLSSF).

It belongs to the UbiA prenyltransferase family. Protoheme IX farnesyltransferase subfamily.

Its subcellular location is the cell inner membrane. It carries out the reaction heme b + (2E,6E)-farnesyl diphosphate + H2O = Fe(II)-heme o + diphosphate. Its pathway is porphyrin-containing compound metabolism; heme O biosynthesis; heme O from protoheme: step 1/1. Functionally, converts heme B (protoheme IX) to heme O by substitution of the vinyl group on carbon 2 of heme B porphyrin ring with a hydroxyethyl farnesyl side group. This is Protoheme IX farnesyltransferase from Ehrlichia ruminantium (strain Gardel).